The chain runs to 374 residues: Deoxyguanosinetriphosphate triphosphohydrolase-like protein (374 aa).

An HD domain is found at 65–196 (RLTHSLEVAQ…ANLADEIAYN (132 aa)).

The protein belongs to the dGTPase family. Type 2 subfamily.

The protein is Deoxyguanosinetriphosphate triphosphohydrolase-like protein (dgt) of Nitrosomonas europaea (strain ATCC 19718 / CIP 103999 / KCTC 2705 / NBRC 14298).